The primary structure comprises 430 residues: Alpha-1,6-mannosyl-glycoprotein 2-beta-N-acetylglucosaminyltransferase (430 aa).

Residues 1 to 12 lie on the Cytoplasmic side of the membrane; that stretch reads MANLWKKQRLRD. The chain crosses the membrane as a helical; Signal-anchor for type II membrane protein span at residues 13 to 35; that stretch reads TGLCRLGILFAVTLSIVLMLVSV. Residues 36–430 lie on the Lumenal side of the membrane; sequence PRTALNGSSI…YRYSSSSASP (395 aa). Residues Asn-41 and Asn-61 are each glycosylated (N-linked (GlcNAc...) asparagine). Residues 104–108 and Asp-135 each bind substrate; that span reads YVHNR. Residues Cys-177 and Cys-188 are joined by a disulfide bond. 205–209 provides a ligand contact to substrate; sequence SLKHH. Residue Asp-237 coordinates Mn(2+). A disulfide bridge connects residues Cys-259 and Cys-262. The N-linked (GlcNAc...) asparagine glycan is linked to Asn-295. Residues Cys-310 and Cys-414 are joined by a disulfide bond. His-345 provides a ligand contact to Mn(2+).

It belongs to the glycosyltransferase 16 (GT16) protein family. Mn(2+) is required as a cofactor.

Its subcellular location is the golgi apparatus membrane. The catalysed reaction is an N(4)-{beta-D-GlcNAc-(1-&gt;2)-alpha-D-Man-(1-&gt;3)-[alpha-D-Man-(1-&gt;6)]-beta-D-Man-(1-&gt;4)-beta-D-GlcNAc-(1-&gt;4)-beta-D-GlcNAc}-L-asparaginyl-[protein] + UDP-N-acetyl-alpha-D-glucosamine = N(4)-{beta-D-GlcNAc-(1-&gt;2)-alpha-D-Man-(1-&gt;3)-[beta-D-GlcNAc-(1-&gt;2)-alpha-D-Man-(1-&gt;6)]-beta-D-Man-(1-&gt;4)-beta-D-GlcNAc-(1-&gt;4)-beta-D-GlcNAc}-L-asparaginyl-[protein] + UDP + H(+). The protein operates within protein modification; protein glycosylation. Functionally, catalyzes an essential step in the conversion of oligo-mannose and hybrid to complex N-glycans. This chain is Alpha-1,6-mannosyl-glycoprotein 2-beta-N-acetylglucosaminyltransferase, found in Arabidopsis thaliana (Mouse-ear cress).